The chain runs to 509 residues: Meiotic fizzy-related protein 2 (509 aa).

6 WD repeats span residues Leu-159–Glu-196, Pro-199–Asp-238, His-242–Val-281, Val-287–Phe-326, Ile-329–Ser-371, and Ile-437–His-477.

It belongs to the WD repeat CDC20/Fizzy family.

It localises to the nucleus. Its function is as follows. Has a role in meiosis. The protein is Meiotic fizzy-related protein 2 (mfr2) of Schizosaccharomyces pombe (strain 972 / ATCC 24843) (Fission yeast).